We begin with the raw amino-acid sequence, 725 residues long: Beta-adducin (725 aa).

The tract at residues 1–22 is disordered; that stretch reads MSEDTVPEAASPPPSQGQHYFD. 2 positions are modified to phosphoserine: S11 and S25. A Phosphothreonine modification is found at T55. 2 positions are modified to phosphoserine: S60 and S344. An interaction with calmodulin region spans residues 425-444; sequence KQQKEKTRWLNTPNTYLRVN. The tract at residues 525–725 is disordered; sequence AEKSRSPSTE…KSKKKEKVES (201 aa). Phosphoserine occurs at positions 530 and 532. T533 is modified (phosphothreonine). Phosphoserine is present on S535. T561 is modified (phosphothreonine). Residues 566-589 show a composition bias toward basic and acidic residues; it reads EEYKKEVERKKLEQEQEGEKDIAT. S594, S598, S602, and S606 each carry phosphoserine. Over residues 596–621 the composition is skewed to polar residues; sequence VKSTPASPVQSPSKAGTKSPAVSPSK. T612 is modified (phosphothreonine). 3 positions are modified to phosphoserine: S614, S618, and S620. Residues 622-631 are compositionally biased toward basic and acidic residues; that stretch reads TSEDTKKTEV. A Phosphothreonine modification is found at T674. A phosphoserine mark is found at S678, S685, S688, S692, S696, S698, S700, S702, and S712. A compositionally biased stretch (low complexity) spans 687–700; that stretch reads TSGPLSPEGSPSKS. A compositionally biased stretch (basic residues) spans 701-725; that stretch reads PSKKKKKFRTPSFLKKSKKKEKVES. An interaction with calmodulin region spans residues 703–720; it reads KKKKKFRTPSFLKKSKKK.

This sequence belongs to the aldolase class II family. Adducin subfamily. As to quaternary structure, found in a complex with ADD2, DMTN and SLC2A1. Interacts with SLC2A1. Heterodimer of an alpha and a beta subunit.

The protein resides in the cytoplasm. Its subcellular location is the cytoskeleton. The protein localises to the cell membrane. Membrane-cytoskeleton-associated protein that promotes the assembly of the spectrin-actin network. Binds to the erythrocyte membrane receptor SLC2A1/GLUT1 and may therefore provide a link between the spectrin cytoskeleton to the plasma membrane. Binds to calmodulin. Calmodulin binds preferentially to the beta subunit. In Mus musculus (Mouse), this protein is Beta-adducin (Add2).